Reading from the N-terminus, the 430-residue chain is Asparagine--tRNA ligase (430 aa).

Belongs to the class-II aminoacyl-tRNA synthetase family. Homodimer.

The protein localises to the cytoplasm. The enzyme catalyses tRNA(Asn) + L-asparagine + ATP = L-asparaginyl-tRNA(Asn) + AMP + diphosphate + H(+). This Staphylococcus saprophyticus subsp. saprophyticus (strain ATCC 15305 / DSM 20229 / NCIMB 8711 / NCTC 7292 / S-41) protein is Asparagine--tRNA ligase.